The chain runs to 224 residues: 7-cyano-7-deazaguanine synthase (224 aa).

An ATP-binding site is contributed by 10–20 (VSGGLDSATVL). Zn(2+) contacts are provided by Cys189, Cys199, Cys202, and Cys205.

It belongs to the QueC family. The cofactor is Zn(2+).

It catalyses the reaction 7-carboxy-7-deazaguanine + NH4(+) + ATP = 7-cyano-7-deazaguanine + ADP + phosphate + H2O + H(+). The protein operates within purine metabolism; 7-cyano-7-deazaguanine biosynthesis. Catalyzes the ATP-dependent conversion of 7-carboxy-7-deazaguanine (CDG) to 7-cyano-7-deazaguanine (preQ(0)). This is 7-cyano-7-deazaguanine synthase from Nitrosococcus oceani (strain ATCC 19707 / BCRC 17464 / JCM 30415 / NCIMB 11848 / C-107).